The primary structure comprises 155 residues: Small ribosomal subunit protein uS7 (155 aa).

It belongs to the universal ribosomal protein uS7 family. As to quaternary structure, part of the 30S ribosomal subunit. Contacts proteins S9 and S11.

Functionally, one of the primary rRNA binding proteins, it binds directly to 16S rRNA where it nucleates assembly of the head domain of the 30S subunit. Is located at the subunit interface close to the decoding center, probably blocks exit of the E-site tRNA. The sequence is that of Small ribosomal subunit protein uS7 from Xylella fastidiosa (strain M23).